Here is a 219-residue protein sequence, read N- to C-terminus: Charged multivesicular body protein 5 (219 aa).

Residues 22–153 (TNVDGRAESI…EIQEALSRSY (132 aa)) are a coiled coil.

This sequence belongs to the SNF7 family. Probable peripherally associated component of the endosomal sorting required for transport complex III (ESCRT-III).

Its subcellular location is the cytoplasm. The protein resides in the cytosol. The protein localises to the endosome membrane. Functionally, probable peripherally associated component of the endosomal sorting required for transport complex III (ESCRT-III) which is involved in multivesicular bodies (MVBs) formation and sorting of endosomal cargo proteins into MVBs. MVBs contain intraluminal vesicles (ILVs) that are generated by invagination and scission from the limiting membrane of the endosome and mostly are delivered to lysosomes enabling degradation of membrane proteins, such as stimulated growth factor receptors, lysosomal enzymes and lipids. The sequence is that of Charged multivesicular body protein 5 (chmp5) from Xenopus laevis (African clawed frog).